The following is a 212-amino-acid chain: Adenylate kinase (212 aa).

Position 14–19 (14–19 (GSGKGT)) interacts with ATP. Residues 34–63 (STGDLFRKKISEDSQFAAQIQNYLSSGSYV) are NMP. AMP is bound by residues Thr35, Arg40, 61–63 (SYV), 89–92 (GYPR), and Gln96. The tract at residues 126–163 (QRLFCQKCQKSYNLLLAKPKNELKCDLDSTDLITRNDD) is LID. Position 127 (Arg127) interacts with ATP. Residues Cys130 and Cys133 each contribute to the Zn(2+) site. 136-137 (SY) contacts ATP. The Zn(2+) site is built by Cys150 and Asp153. AMP contacts are provided by Arg160 and Arg171. Gln199 contacts ATP.

Belongs to the adenylate kinase family. Monomer.

Its subcellular location is the cytoplasm. The enzyme catalyses AMP + ATP = 2 ADP. It participates in purine metabolism; AMP biosynthesis via salvage pathway; AMP from ADP: step 1/1. Functionally, catalyzes the reversible transfer of the terminal phosphate group between ATP and AMP. Plays an important role in cellular energy homeostasis and in adenine nucleotide metabolism. This chain is Adenylate kinase, found in Mesomycoplasma hyopneumoniae (strain J / ATCC 25934 / NCTC 10110) (Mycoplasma hyopneumoniae).